Here is a 69-residue protein sequence, read N- to C-terminus: UPF0270 protein VCM66_2532 (69 aa).

It belongs to the UPF0270 family.

In Vibrio cholerae serotype O1 (strain M66-2), this protein is UPF0270 protein VCM66_2532.